A 149-amino-acid chain; its full sequence is Nucleoside diphosphate kinase 1 (149 aa).

Residues lysine 10, phenylalanine 58, arginine 86, threonine 92, arginine 103, and asparagine 113 each coordinate ATP. The active-site Pros-phosphohistidine intermediate is the histidine 116.

It belongs to the NDK family. The cofactor is Mg(2+).

It catalyses the reaction a 2'-deoxyribonucleoside 5'-diphosphate + ATP = a 2'-deoxyribonucleoside 5'-triphosphate + ADP. It carries out the reaction a ribonucleoside 5'-diphosphate + ATP = a ribonucleoside 5'-triphosphate + ADP. Functionally, major role in the synthesis of nucleoside triphosphates other than ATP. The ATP gamma phosphate is transferred to the NDP beta phosphate via a ping-pong mechanism, using a phosphorylated active-site intermediate. This NDK is microtubule-associated. The polypeptide is Nucleoside diphosphate kinase 1 (NDPK1) (Pisum sativum (Garden pea)).